Reading from the N-terminus, the 154-residue chain is Protein X (154 aa).

Residues 68–117 (PCALRFTSARRMETTVNAHQVLPKVLHKRTLGLSAMSTTDLEAYFKDCLF) form a mitochondrial targeting sequence region.

The protein belongs to the orthohepadnavirus protein X family. In terms of assembly, may form homodimer. May interact with host CEBPA, CFLAR, CREB1, DDB1, E4F1, HBXIP, HSPD1/HSP60, NFKBIA, POLR2E and SMAD4. Interacts with host SMC5-SMC6 complex and induces its degradation. Interacts with host TRPC4AP; leading to prevent ubiquitination of TRPC4AP. Interacts with host PLSCR1; this interaction promotes ubiquitination and degradation of HBx and impairs HBx-mediated cell proliferation. Post-translationally, a fraction may be phosphorylated in insect cells and HepG2 cells, a human hepatoblastoma cell line. Phosphorylated in vitro by host protein kinase C or mitogen-activated protein kinase. N-acetylated in insect cells.

The protein resides in the host cytoplasm. Its subcellular location is the host nucleus. It localises to the host mitochondrion. In terms of biological role, multifunctional protein that plays a role in silencing host antiviral defenses and promoting viral transcription. Does not seem to be essential for HBV infection. May be directly involved in development of cirrhosis and liver cancer (hepatocellular carcinoma). Most of cytosolic activities involve modulation of cytosolic calcium. The effect on apoptosis is controversial depending on the cell types in which the studies have been conducted. May induce apoptosis by localizing in mitochondria and causing loss of mitochondrial membrane potential. May also modulate apoptosis by binding host CFLAR, a key regulator of the death-inducing signaling complex (DISC). Promotes viral transcription by using the host E3 ubiquitin ligase DDB1 to target the SMC5-SMC6 complex to proteasomal degradation. This host complex would otherwise bind to viral episomal DNA, and prevents its transcription. Moderately stimulates transcription of many different viral and cellular transcription elements. Promoters and enhancers stimulated by HBx contain DNA binding sites for NF-kappa-B, AP-1, AP-2, c-EBP, ATF/CREB, or the calcium-activated factor NF-AT. In Hepatitis B virus genotype C subtype adr (strain Japan/adr4/1983) (HBV-C), this protein is Protein X.